A 423-amino-acid polypeptide reads, in one-letter code: MALKATNFFTEPEYKLQDDLILDIRDLHVSFKVKDGIMQAVRGVDLKVKKGSIVGIVGESGSGKSVCVKSIIGFNDGAKTTAKLMNFKNIDISKMKKHQWQYYRGTYVSYISQDPLFSLNPTMTIGRQVKEAIYVSCKRRYYQTKSDLKYDLQTERIDLDTYKEKLAQAKETYKAKTTKAAVHAKTLEILNFIGIDQAEKRLKAFPSEFSGGMRQRIVIAIAVATEPDLIIADEPTTALDVTIQAKALNLIKQLRDLLNITIIFISHNISLIANFCDFVYVMYAGRLVEKGLVEEIFTNPVHPYTWALMASIPEGTDKNAPLTSIPGYIPNMLSPPKGDAFAARNQFALAIDFEHQPPFFDVTETHKAATWLLHPQAPKVEMPADVKEKIAITRKALAIKMPSQPVKQPKSNGNKKTKTKSAR.

The 286-residue stretch at 24 to 309 (IRDLHVSFKV…PVHPYTWALM (286 aa)) folds into the ABC transporter domain. Residue 58 to 65 (GESGSGKS) coordinates ATP. Residues 398–423 (AIKMPSQPVKQPKSNGNKKTKTKSAR) are disordered. The span at 413–423 (GNKKTKTKSAR) shows a compositional bias: basic residues.

It belongs to the ABC transporter superfamily. The complex is composed of two ATP-binding proteins (OppD and OppF), two transmembrane proteins (OppB and OppC) and a solute-binding protein (OppA).

It is found in the cell membrane. It carries out the reaction a [peptide](out) + ATP + H2O = a [peptide](in) + ADP + phosphate + H(+). In terms of biological role, part of the ABC transporter complex OppABCDF involved in the uptake of oligopeptides. Probably responsible for energy coupling to the transport system. The sequence is that of Oligopeptide transport ATP-binding protein OppD (oppD) from Mycoplasma pneumoniae (strain ATCC 29342 / M129 / Subtype 1) (Mycoplasmoides pneumoniae).